The sequence spans 267 residues: Undecaprenyl-diphosphatase (267 aa).

The next 7 helical transmembrane spans lie at 4-24 (LYAL…ISST), 41-61 (FWKS…IFVF), 69-89 (LDIW…GLFV), 96-116 (LFNG…FILI), 173-193 (AAEF…AYSI), 207-227 (IPLG…IKFF), and 239-259 (FGIY…SGIL).

It belongs to the UppP family.

Its subcellular location is the cell inner membrane. The catalysed reaction is di-trans,octa-cis-undecaprenyl diphosphate + H2O = di-trans,octa-cis-undecaprenyl phosphate + phosphate + H(+). Functionally, catalyzes the dephosphorylation of undecaprenyl diphosphate (UPP). Confers resistance to bacitracin. This is Undecaprenyl-diphosphatase from Campylobacter jejuni subsp. jejuni serotype O:2 (strain ATCC 700819 / NCTC 11168).